The chain runs to 171 residues: Endoribonuclease ToxN (171 aa).

It belongs to the ToxN/AbiQ toxin family. In terms of assembly, one ToxN monomer binds to a 36-nt-long single repeat of the ToxI RNA; this complex forms a triangular heterohexameric complex with ToxN connected by the ToxI RNA to another toxin molecule. The ToxI repeat forms a pseudoknot which occludes the toxin active site. Interaction of ToxI with ToxN partially inhibits the latter's endoribonuclease activity in vitro. The complex self-assembles in vitro with either full-length or processed single repeats; during the process the precursor is processed.

In terms of biological role, toxic component of a type III toxin-antitoxin (TA) system. An endoribonuclease which is active independently of the ribosome, cleaving between the second and third A of AAA(U/G) sequences, although not all occurrences of this tetranucleotide are cleaved. Digests many mRNA species, including its own transcript and its cognate antitoxin RNA ToxI. ToxI has 5.5 nearly identical 36 nucleotide-long repeats (a single repeat neutralizes the toxin in vivo); a single repeat folds into a pseudoknot which binds the toxin. The ToxI precursor RNA is a preferential target in vivo and is progressively degraded to single repeat lengths as ToxN-ToxI complex self-assembly occurs. In vivo expression of ToxI antitoxin inhibits endonuclease activity of ToxN. The toxin alone inhibits growth when expressed in E.coli without causing cell lysis; this bacteriostatic effect is neutralized by cognate RNA antitoxin ToxI. Non-cognate antitoxin RNA from B.thuringiensis does not inhibit this toxin. The RNA antitoxin is less stable than the proteinaceous toxin; synthesis of ToxI in the absence of new ToxN synthesis restores growth and also detectable accumulation of the ToxN protein. Negatively regulates its own operon in complex with ToxI. The toxin-antitoxin system functions in plasmid maintenance (a plasmid addiction system). The TA system protects P.atrosepticum strain 1043 against phage phiM1 and phiA2, E.coli against some but not all coliphages and S.marcescens against some bacteriophages, causing an abortive infection (Abi phenotype). Also protects P.atrosepticum strain 1043 against phage phiTE; phage that escape Abi and grow in this bacterium have evolved a pseudo-ToxI RNA by expanding a pre-existing sequence similar to the bona fide ToxI repeats. In Pectobacterium atrosepticum (Erwinia carotovora subsp. atroseptica), this protein is Endoribonuclease ToxN.